The chain runs to 184 residues: MSAAAGLIPPPVSWAQRNDLIYVIIDVECKDIEHKVTEKTFTFKGVNVLDPSKKYEVTLNFLHEVDPEKVTSKNIGRCLEFTIPKKAAGPYWSSLTTDKTKLHFLKANFAKWRDESDDEEGDQKDNSMFGNFLNSPGGDWNNKFDDFNVDDEEEDSDDNIPSLSQNDEDDEEGGEGDKEKKPAA.

A CS domain is found at 7 to 96 (LIPPPVSWAQ…AAGPYWSSLT (90 aa)). The tract at residues 115 to 184 (ESDDEEGDQK…EGDKEKKPAA (70 aa)) is disordered. Phosphoserine occurs at positions 116, 127, 135, 156, and 162. Residues 147 to 158 (FNVDDEEEDSDD) are compositionally biased toward acidic residues. The span at 175–184 (EGDKEKKPAA) shows a compositional bias: basic and acidic residues.

It belongs to the p23/wos2 family.

Its subcellular location is the cytoplasm. It catalyses the reaction prostaglandin H2 = prostaglandin E2. Functionally, cytosolic prostaglandin synthase that catalyzes the oxidoreduction of prostaglandin endoperoxide H2 (PGH2) to prostaglandin E2 (PGE2). Through production of PGE2 may regulate the activity of non-muscle myosin II in an autocrine or paracrine fashion; this may influence border cell and nurse cell stiffness to facilitate border cell migration during oogenesis. This Drosophila melanogaster (Fruit fly) protein is Cytosolic Prostaglandin E synthase.